We begin with the raw amino-acid sequence, 588 residues long: Adenine deaminase (588 aa).

It belongs to the metallo-dependent hydrolases superfamily. Adenine deaminase family. In terms of assembly, homodimer. It depends on Mn(2+) as a cofactor.

The catalysed reaction is adenine + H2O + H(+) = hypoxanthine + NH4(+). In Escherichia coli O6:H1 (strain CFT073 / ATCC 700928 / UPEC), this protein is Adenine deaminase.